A 141-amino-acid chain; its full sequence is NADH-quinone oxidoreductase subunit A (141 aa).

The next 3 membrane-spanning stretches (helical) occupy residues 24–44 (LLAL…LLLA), 77–97 (VPFY…AFIA), and 106–126 (LGWA…VALI).

Belongs to the complex I subunit 3 family. NDH-1 is composed of 14 different subunits. Subunits NuoA, H, J, K, L, M, N constitute the membrane sector of the complex.

The protein localises to the cell inner membrane. The enzyme catalyses a quinone + NADH + 5 H(+)(in) = a quinol + NAD(+) + 4 H(+)(out). Its function is as follows. NDH-1 shuttles electrons from NADH, via FMN and iron-sulfur (Fe-S) centers, to quinones in the respiratory chain. The immediate electron acceptor for the enzyme in this species is believed to be ubiquinone. Couples the redox reaction to proton translocation (for every two electrons transferred, four hydrogen ions are translocated across the cytoplasmic membrane), and thus conserves the redox energy in a proton gradient. This Syntrophotalea carbinolica (strain DSM 2380 / NBRC 103641 / GraBd1) (Pelobacter carbinolicus) protein is NADH-quinone oxidoreductase subunit A.